We begin with the raw amino-acid sequence, 485 residues long: Aspartyl/glutamyl-tRNA(Asn/Gln) amidotransferase subunit B (485 aa).

Belongs to the GatB/GatE family. GatB subfamily. In terms of assembly, heterotrimer of A, B and C subunits.

It catalyses the reaction L-glutamyl-tRNA(Gln) + L-glutamine + ATP + H2O = L-glutaminyl-tRNA(Gln) + L-glutamate + ADP + phosphate + H(+). It carries out the reaction L-aspartyl-tRNA(Asn) + L-glutamine + ATP + H2O = L-asparaginyl-tRNA(Asn) + L-glutamate + ADP + phosphate + 2 H(+). Functionally, allows the formation of correctly charged Asn-tRNA(Asn) or Gln-tRNA(Gln) through the transamidation of misacylated Asp-tRNA(Asn) or Glu-tRNA(Gln) in organisms which lack either or both of asparaginyl-tRNA or glutaminyl-tRNA synthetases. The reaction takes place in the presence of glutamine and ATP through an activated phospho-Asp-tRNA(Asn) or phospho-Glu-tRNA(Gln). The sequence is that of Aspartyl/glutamyl-tRNA(Asn/Gln) amidotransferase subunit B from Opitutus terrae (strain DSM 11246 / JCM 15787 / PB90-1).